The sequence spans 188 residues: MAFPGQSDTKMQWPEVPALPLLSSLCMAMVRKSSALGKEVGRRSEGNGDAGGPFPAVKFPIKDIQFSESGEGTRFLHGARLSPLSRNIKARLLLYVRASPLFYESRITLKKPSNRHEVKRNRCNRKTAKQMLMTTLFNELEPTRKYGITEDCTSLNRVLFSANRKCLHKSLYKKDCFKAAPFSMFSFR.

This is an uncharacterized protein from Homo sapiens (Human).